Consider the following 297-residue polypeptide: MTAPETLFESSLSSLRLKARGKVRDIYEAGDDLMLIVTTDRLSAFDVILPDPIPGKGRVLTRVSRFWFERLKDRVPNHLSGTPLEAVLPDPAEREQVEGRAMVVKRLRPLPVEAVVRGYLIGSGWKDYQRSGAVCGIGLPSGLRLAERLPDALFTPSTKAEMGSHDENIGFDQVVGLIGRELAERMREVALGLYREAAAYALDRGIIIADTKFEFGVDEAGVLHWIDEALTPDSSRFWPADGYRPGISPPSFDKQFVRDYLETLEWDKKPPAPHLPPDILARTAEKYREAERRLTGE.

The protein belongs to the SAICAR synthetase family.

The enzyme catalyses 5-amino-1-(5-phospho-D-ribosyl)imidazole-4-carboxylate + L-aspartate + ATP = (2S)-2-[5-amino-1-(5-phospho-beta-D-ribosyl)imidazole-4-carboxamido]succinate + ADP + phosphate + 2 H(+). Its pathway is purine metabolism; IMP biosynthesis via de novo pathway; 5-amino-1-(5-phospho-D-ribosyl)imidazole-4-carboxamide from 5-amino-1-(5-phospho-D-ribosyl)imidazole-4-carboxylate: step 1/2. This Methylococcus capsulatus (strain ATCC 33009 / NCIMB 11132 / Bath) protein is Phosphoribosylaminoimidazole-succinocarboxamide synthase.